Reading from the N-terminus, the 493-residue chain is Glutamate synthase [NADPH] small chain (493 aa).

299 to 313 (GGGDTGADCVATALR) lines the NADP(+) pocket.

This sequence belongs to the glutamate synthase family. Aggregate of 4 catalytic active heterodimers, consisting of a large and a small subunit.

The enzyme catalyses 2 L-glutamate + NADP(+) = L-glutamine + 2-oxoglutarate + NADPH + H(+). It participates in amino-acid biosynthesis; L-glutamate biosynthesis via GLT pathway; L-glutamate from 2-oxoglutarate and L-glutamine (NADP(+) route): step 1/1. The protein operates within energy metabolism; nitrogen metabolism. This Bacillus subtilis (strain 168) protein is Glutamate synthase [NADPH] small chain (gltB).